The following is a 351-amino-acid chain: Lipoyl synthase, mitochondrial (351 aa).

Residues cysteine 84, cysteine 89, cysteine 95, cysteine 115, cysteine 119, cysteine 122, and serine 330 each coordinate [4Fe-4S] cluster. Residues 100–319 form the Radical SAM core domain; sequence DKSKATATIM…QKRAMDMGFL (220 aa).

Belongs to the radical SAM superfamily. Lipoyl synthase family. [4Fe-4S] cluster is required as a cofactor.

Its subcellular location is the mitochondrion. It catalyses the reaction [[Fe-S] cluster scaffold protein carrying a second [4Fe-4S](2+) cluster] + N(6)-octanoyl-L-lysyl-[protein] + 2 oxidized [2Fe-2S]-[ferredoxin] + 2 S-adenosyl-L-methionine + 4 H(+) = [[Fe-S] cluster scaffold protein] + N(6)-[(R)-dihydrolipoyl]-L-lysyl-[protein] + 4 Fe(3+) + 2 hydrogen sulfide + 2 5'-deoxyadenosine + 2 L-methionine + 2 reduced [2Fe-2S]-[ferredoxin]. Its pathway is protein modification; protein lipoylation via endogenous pathway; protein N(6)-(lipoyl)lysine from octanoyl-[acyl-carrier-protein]: step 2/2. Functionally, catalyzes the radical-mediated insertion of two sulfur atoms into the C-6 and C-8 positions of the octanoyl moiety bound to the lipoyl domains of lipoate-dependent enzymes, thereby converting the octanoylated domains into lipoylated derivatives. The chain is Lipoyl synthase, mitochondrial from Yarrowia lipolytica (strain CLIB 122 / E 150) (Yeast).